The sequence spans 138 residues: uncharacterized protein (138 aa).

Transmembrane regions (helical) follow at residues 21 to 43 and 48 to 65; these read TAFILLIVLAGFGYTAYKIAGGA and SLIAAAIFALFISLYAII.

The protein resides in the cell membrane. This is an uncharacterized protein from Archaeoglobus fulgidus (strain ATCC 49558 / DSM 4304 / JCM 9628 / NBRC 100126 / VC-16).